A 199-amino-acid polypeptide reads, in one-letter code: Potassium-transporting ATPase KdpC subunit 2 (199 aa).

A helical membrane pass occupies residues 13–33 (ITLIFWLVTAIIYPLAILVVG).

This sequence belongs to the KdpC family. In terms of assembly, the system is composed of three essential subunits: KdpA, KdpB and KdpC.

Its subcellular location is the cell inner membrane. Part of the high-affinity ATP-driven potassium transport (or Kdp) system, which catalyzes the hydrolysis of ATP coupled with the electrogenic transport of potassium into the cytoplasm. This subunit acts as a catalytic chaperone that increases the ATP-binding affinity of the ATP-hydrolyzing subunit KdpB by the formation of a transient KdpB/KdpC/ATP ternary complex. The protein is Potassium-transporting ATPase KdpC subunit 2 of Nostoc sp. (strain PCC 7120 / SAG 25.82 / UTEX 2576).